The sequence spans 186 residues: Peptidyl-tRNA hydrolase (186 aa).

Tyr14 contributes to the tRNA binding site. His19 (proton acceptor) is an active-site residue. TRNA contacts are provided by Phe64, Asn66, and Asn112.

The protein belongs to the PTH family. In terms of assembly, monomer.

The protein localises to the cytoplasm. The catalysed reaction is an N-acyl-L-alpha-aminoacyl-tRNA + H2O = an N-acyl-L-amino acid + a tRNA + H(+). Functionally, hydrolyzes ribosome-free peptidyl-tRNAs (with 1 or more amino acids incorporated), which drop off the ribosome during protein synthesis, or as a result of ribosome stalling. Its function is as follows. Catalyzes the release of premature peptidyl moieties from peptidyl-tRNA molecules trapped in stalled 50S ribosomal subunits, and thus maintains levels of free tRNAs and 50S ribosomes. In Mycoplasma mycoides subsp. mycoides SC (strain CCUG 32753 / NCTC 10114 / PG1), this protein is Peptidyl-tRNA hydrolase.